The primary structure comprises 215 residues: MKILVTGFDPFGGDKINPAIEAVKRLPAEINGAEIIKLEIPTVFNKSAEVVKKAIEKEKPDYVLNVGQAGGRFGLTPERVAININDGRIPDNEGYQPLGEPIHEDGETAYFTQLPIKAEAKAIRDAGLPASVSNTAGTYVCNHIMYQVQYMRDKEFPNIKAGFIHIPFLPEQVVNRPNTPSMALGDIVKGLTAALSAIVERDGKGDIKAVEGANH.

Active-site residues include Glu-78, Cys-141, and His-165.

It belongs to the peptidase C15 family. Homotetramer.

The protein resides in the cytoplasm. It carries out the reaction Release of an N-terminal pyroglutamyl group from a polypeptide, the second amino acid generally not being Pro.. Removes 5-oxoproline from various penultimate amino acid residues except L-proline. This chain is Pyrrolidone-carboxylate peptidase, found in Lactobacillus johnsonii (strain CNCM I-12250 / La1 / NCC 533).